Here is a 512-residue protein sequence, read N- to C-terminus: ATP synthase subunit alpha (512 aa).

169-176 (GDRQTGKT) is a binding site for ATP.

The protein belongs to the ATPase alpha/beta chains family. As to quaternary structure, F-type ATPases have 2 components, CF(1) - the catalytic core - and CF(0) - the membrane proton channel. CF(1) has five subunits: alpha(3), beta(3), gamma(1), delta(1), epsilon(1). CF(0) has three main subunits: a(1), b(2) and c(9-12). The alpha and beta chains form an alternating ring which encloses part of the gamma chain. CF(1) is attached to CF(0) by a central stalk formed by the gamma and epsilon chains, while a peripheral stalk is formed by the delta and b chains.

Its subcellular location is the cell inner membrane. It catalyses the reaction ATP + H2O + 4 H(+)(in) = ADP + phosphate + 5 H(+)(out). In terms of biological role, produces ATP from ADP in the presence of a proton gradient across the membrane. The alpha chain is a regulatory subunit. The protein is ATP synthase subunit alpha of Leptothrix cholodnii (strain ATCC 51168 / LMG 8142 / SP-6) (Leptothrix discophora (strain SP-6)).